The primary structure comprises 112 residues: uncharacterized protein (112 aa).

The interval 1-27 (MIASIGDSAEPPLRRTRRAQQQDRPPT) is disordered.

This is an uncharacterized protein from Orgyia pseudotsugata multicapsid polyhedrosis virus (OpMNPV).